We begin with the raw amino-acid sequence, 1004 residues long: Protein CHUP1, chloroplastic (1004 aa).

The tract at residues Met1 to Pro25 is required for chloroplast localization. The tract at residues Asn22–Glu63 is disordered. A coiled-coil region spans residues Glu123–Arg341. The leucine-zipper 1 stretch occupies residues Leu269 to Leu290. 4 disordered regions span residues Gly398–Lys482, Phe504–Leu536, Thr612–Val718, and Ser736–Ala755. Ser399 carries the post-translational modification Phosphoserine. The segment covering Glu409–Gly419 has biased composition (polar residues). Residues Ser427–Ser439 show a composition bias toward low complexity. Polar residues-rich tracts occupy residues Phe504–Thr517 and Thr612–Ser624. The segment covering Ala670–Gly706 has biased composition (pro residues). Residues Leu744–Ala755 show a composition bias toward polar residues. The leucine-zipper 2 stretch occupies residues Leu802 to Leu823. The interval Arg979 to Asn1004 is disordered.

As to expression, expressed in cauline leaves, rosette leaves, stems and flowers, but not in roots.

The protein resides in the plastid. The protein localises to the chloroplast outer membrane. Its function is as follows. Required for the positioning and movement of chloroplasts. Interacts with profilin and actin independent of its polymerization status. Regulates chloroplast localization by anchoring chloroplasts to the plasma membrane and forming a bridge to the actin cytoskeleton. The sequence is that of Protein CHUP1, chloroplastic (CHUP1) from Arabidopsis thaliana (Mouse-ear cress).